The sequence spans 374 residues: MVNEEEKDLTAEGDSNNTGVSPDSIKNKTLDFYPKEKTTERKTRSRERISRKEVNLRFKAYLKSRLFRDYAYIIFAAFLGMASYDYFIAATTSNGITPSGIGGVARGIAVGIWPNQDQLQMQTSMYWVFYFVFNIPLFIFGVIKIGIRFSFRTIVYIGLQNGFHFAFAYIPVINPQELFFIVNYNSLNIFSNYGGMYQIWLFVFAAVAGILNGIAYGLVYKGGASTAGTDFVFAYYSAKKKISIANYNRIVNYIIIVVMLAIHTTLLSRSELTSIYFGKYWAANIEQIQRLGFKIDDGGLYDSDFTSHKIKYFFGPALFASYLFVVVQAITIDIIFPKFKYRSLMVITSKADAVVSGLQYVHYPNDIIRLPARD.

Residues 1-46 (MVNEEEKDLTAEGDSNNTGVSPDSIKNKTLDFYPKEKTTERKTRSR) form a disordered region. Residues 25-46 (IKNKTLDFYPKEKTTERKTRSR) show a composition bias toward basic and acidic residues. 6 helical membrane passes run 70 to 90 (YAYI…FIAA), 127 to 147 (WVFY…KIGI), 153 to 173 (TIVY…IPVI), 199 to 219 (IWLF…YGLV), 242 to 262 (ISIA…MLAI), and 312 to 332 (YFFG…AITI).

To M.genitalium MG432 and MG443.

It is found in the cell membrane. This is an uncharacterized protein from Spiroplasma citri.